The following is a 260-amino-acid chain: HTH-type transcriptional repressor NanR (260 aa).

The disordered stretch occupies residues 1–21 (MSAFDHSSDDTQETIGNSLRR). Residues 27–95 (KKLSEMVEEE…NGERARVSRP (69 aa)) enclose the HTH gntR-type domain. Positions 55–74 (ERELMAFFNVGRPSVREALA) form a DNA-binding region, H-T-H motif.

It belongs to the NanR family.

In terms of biological role, transcriptional repressor that controls expression of the genes required for the catabolism of sialic acids. The polypeptide is HTH-type transcriptional repressor NanR (Klebsiella aerogenes (strain ATCC 13048 / DSM 30053 / CCUG 1429 / JCM 1235 / KCTC 2190 / NBRC 13534 / NCIMB 10102 / NCTC 10006 / CDC 819-56) (Enterobacter aerogenes)).